A 575-amino-acid polypeptide reads, in one-letter code: Stage VI sporulation protein D (575 aa).

The disordered stretch occupies residues 159–502; the sequence is EELSEPPAHS…ETKEPQTKES (344 aa). Basic and acidic residues predominate over residues 200–212; sequence GLREELETEKAES. Acidic residues-rich tracts occupy residues 229-238 and 249-264; these read KEEEESEELA and ETEESEPEPDPSEIEI. 3 stretches are compositionally biased toward basic and acidic residues: residues 266-275, 283-302, and 310-325; these read EIVKAKKETA, DVREEADSPAETELREHVGA, and AELHSETVIAKEKEET. Over residues 438-448 the composition is skewed to acidic residues; that stretch reads EEEEQEEESFE. Positions 449–464 are enriched in basic and acidic residues; sequence IEVRKTPSAEEPKEET. The segment covering 465-474 has biased composition (polar residues); sequence PFQSFQLPES. Residues 493–502 show a composition bias toward basic and acidic residues; that stretch reads ETKEPQTKES. The 45-residue stretch at 523–567 folds into the LysM domain; sequence KICIVQQEDTIERLCERYEITSQQLIRMNSLALDDELKAGQILYI.

Its function is as follows. Required for assembly of a normal spore coat. May be a component of the innermost layer of the spore coat that aids in its adherence to the prespore. The polypeptide is Stage VI sporulation protein D (spoVID) (Bacillus subtilis (strain 168)).